The sequence spans 358 residues: Fructose-bisphosphate aldolase 7, cytosolic (358 aa).

S2 is modified (N-acetylserine). A substrate-binding site is contributed by R52. An S-glutathionyl cysteine; transient modification is found at C68. Residue K142 participates in substrate binding. C173 is subject to S-glutathionyl cysteine; transient; alternate. C173 carries the S-nitrosocysteine; transient; alternate modification. E183 functions as the Proton acceptor in the catalytic mechanism. K225 (schiff-base intermediate with dihydroxyacetone-P) is an active-site residue. 266–268 (SGI) is a substrate binding site.

Belongs to the class I fructose-bisphosphate aldolase family. Homotetramer. In terms of processing, S-glutathionylated at Cys-68 and Cys-173. S-nitrosylated at Cys-173. Highly expressed in flowers, and at lower levels in rosettes leaves and cauline leaves.

Its subcellular location is the cytoplasm. The protein localises to the cytosol. It carries out the reaction beta-D-fructose 1,6-bisphosphate = D-glyceraldehyde 3-phosphate + dihydroxyacetone phosphate. It participates in carbohydrate degradation; glycolysis; D-glyceraldehyde 3-phosphate and glycerone phosphate from D-glucose: step 4/4. In terms of biological role, plays a key role in glycolysis and gluconeogenesis. The sequence is that of Fructose-bisphosphate aldolase 7, cytosolic from Arabidopsis thaliana (Mouse-ear cress).